A 466-amino-acid chain; its full sequence is Histidine--tRNA ligase (466 aa).

Belongs to the class-II aminoacyl-tRNA synthetase family. In terms of assembly, homodimer.

Its subcellular location is the cytoplasm. The catalysed reaction is tRNA(His) + L-histidine + ATP = L-histidyl-tRNA(His) + AMP + diphosphate + H(+). The protein is Histidine--tRNA ligase of Bifidobacterium animalis subsp. lactis (strain AD011).